Consider the following 395-residue polypeptide: Selection and upkeep of intraepithelial T-cells protein 7 (395 aa).

The N-terminal stretch at 1–25 (MMKPEFFCFSGFCVYFLFLQVVVSS) is a signal peptide. An Ig-like V-type domain is found at 26–141 (EKLRVTTPTR…DAAIMNLNVT (116 aa)). Topologically, residues 26–248 (EKLRVTTPTR…FNRDRIWMES (223 aa)) are extracellular. The cysteines at positions 49 and 123 are disulfide-linked. N-linked (GlcNAc...) asparagine glycans are attached at residues Asn92 and Asn139. The 92-residue stretch at 142–233 (AVGLETEIHV…TGEEKQTSII (92 aa)) folds into the Ig-like C1-type domain. Cys163 and Cys217 are oxidised to a cystine. A helical membrane pass occupies residues 249–269 (LASIVWIMLSVYILYIICFYW). Over 270–287 (RTGCASGCLSKCFCVVTS) the chain is Cytoplasmic. The helical transmembrane segment at 288 to 308 (WPVQIVHLLFCTGTFFAIYLP) threads the bilayer. The Extracellular portion of the chain corresponds to 309-329 (HRSRVSLSDPQFPLYNNWITE). Residues 330 to 350 (LLFVILFLTICFALPIILLFI) form a helical membrane-spanning segment. Topologically, residues 351–395 (QFQFTSLTKWEKNKDGIMDQPRLGKAHETSSLYRKKTGKSWEQEK) are cytoplasmic. Positions 371 to 395 (PRLGKAHETSSLYRKKTGKSWEQEK) are disordered.

The protein belongs to the SKINT family. As to expression, expressed in skin, thymus, testis and, to a lower extent, bladder.

It is found in the membrane. May act by engaging a cell surface molecule on immature T-cells in the embryonic thymus. In Mus musculus (Mouse), this protein is Selection and upkeep of intraepithelial T-cells protein 7 (Skint7).